A 64-amino-acid polypeptide reads, in one-letter code: Large ribosomal subunit protein bL35 (64 aa).

This sequence belongs to the bacterial ribosomal protein bL35 family.

This chain is Large ribosomal subunit protein bL35, found in Desulforamulus reducens (strain ATCC BAA-1160 / DSM 100696 / MI-1) (Desulfotomaculum reducens).